The following is a 187-amino-acid chain: Large ribosomal subunit protein bL25 (187 aa).

The protein belongs to the bacterial ribosomal protein bL25 family. CTC subfamily. As to quaternary structure, part of the 50S ribosomal subunit; part of the 5S rRNA/L5/L18/L25 subcomplex. Contacts the 5S rRNA. Binds to the 5S rRNA independently of L5 and L18.

Functionally, this is one of the proteins that binds to the 5S RNA in the ribosome where it forms part of the central protuberance. The polypeptide is Large ribosomal subunit protein bL25 (Tropheryma whipplei (strain TW08/27) (Whipple's bacillus)).